The primary structure comprises 2110 residues: Protein Ycf2 (2110 aa).

Position 1336–1343 (1336–1343 (GSIGTGRS)) interacts with ATP. Residues 1852–1876 (EEEAELQDEEAELQDEGAGRKDEEA) form a disordered region. Residues 1854 to 1866 (EAELQDEEAELQD) are compositionally biased toward acidic residues.

Belongs to the Ycf2 family.

It localises to the plastid. The protein localises to the chloroplast stroma. Probable ATPase of unknown function. Its presence in a non-photosynthetic plant (Epifagus virginiana) and experiments in tobacco indicate that it has an essential function which is probably not related to photosynthesis. The protein is Protein Ycf2 (ycf2-A) of Pelargonium hortorum (Common geranium).